Reading from the N-terminus, the 261-residue chain is MASKANMVRQRFSRLSQRMSAFQINLNPLKEPLGFIKILEWFASIFAFATCGGFKGKTEIQVNCPKVGVNKNQTVTATFGYPFRLNQASFHTPPNVSVCDVNWEKHVLIGDYSSSAQFYVTFAVFVFLYCIAALLLYVGYTNLYRDSRKLPMIDFIVTLVATFLWLVSSSAWAKALTDIKVATGHRIVEELEICNPESGVSCYFVSVTSMGSLNVSVIFGFLNMILWGGNAWFVYKETSLHSPSNTSASHSQGGGPPTSGM.

The Cytoplasmic portion of the chain corresponds to 1-33 (MASKANMVRQRFSRLSQRMSAFQINLNPLKEPL). An MARVEL domain is found at 28–239 (PLKEPLGFIK…NAWFVYKETS (212 aa)). The chain crosses the membrane as a helical span at residues 34-54 (GFIKILEWFASIFAFATCGGF). At 55 to 117 (KGKTEIQVNC…LIGDYSSSAQ (63 aa)) the chain is on the vesicular side. Residues Asn72 and Asn95 are each glycosylated (N-linked (GlcNAc...) asparagine). Residues 118–138 (FYVTFAVFVFLYCIAALLLYV) traverse the membrane as a helical segment. Over 139 to 151 (GYTNLYRDSRKLP) the chain is Cytoplasmic. A helical transmembrane segment spans residues 152-172 (MIDFIVTLVATFLWLVSSSAW). Residues 173-214 (AKALTDIKVATGHRIVEELEICNPESGVSCYFVSVTSMGSLN) lie on the Vesicular side of the membrane. Asn214 is a glycosylation site (N-linked (GlcNAc...) asparagine). Residues 215–235 (VSVIFGFLNMILWGGNAWFVY) form a helical membrane-spanning segment. Over 236–261 (KETSLHSPSNTSASHSQGGGPPTSGM) the chain is Cytoplasmic. The segment covering 241–251 (HSPSNTSASHS) has biased composition (polar residues). Residues 241–261 (HSPSNTSASHSQGGGPPTSGM) are disordered. Positions 252–261 (QGGGPPTSGM) are enriched in gly residues.

Belongs to the synaptophysin/synaptobrevin family. In terms of tissue distribution, ubiquitously expressed.

Its subcellular location is the cytoplasmic vesicle membrane. It localises to the melanosome. The chain is Synaptophysin-like protein 1 (Sypl1) from Mus musculus (Mouse).